The chain runs to 601 residues: Elongation factor 4 (601 aa).

A tr-type G domain is found at 2–184; sequence DLIRNFSIIA…EMIARVPPPT (183 aa). Residues 14–19 and 131–134 contribute to the GTP site; these read DHGKST and NKID.

This sequence belongs to the TRAFAC class translation factor GTPase superfamily. Classic translation factor GTPase family. LepA subfamily.

The protein localises to the cell inner membrane. The catalysed reaction is GTP + H2O = GDP + phosphate + H(+). Functionally, required for accurate and efficient protein synthesis under certain stress conditions. May act as a fidelity factor of the translation reaction, by catalyzing a one-codon backward translocation of tRNAs on improperly translocated ribosomes. Back-translocation proceeds from a post-translocation (POST) complex to a pre-translocation (PRE) complex, thus giving elongation factor G a second chance to translocate the tRNAs correctly. Binds to ribosomes in a GTP-dependent manner. The protein is Elongation factor 4 of Polynucleobacter necessarius subsp. necessarius (strain STIR1).